The chain runs to 230 residues: Flagellar L-ring protein (230 aa).

Residues 1-16 form the signal peptide; it reads MYLVFGIIFTSVIVTS. A lipid anchor (N-palmitoyl cysteine) is attached at cysteine 17. Cysteine 17 carries S-diacylglycerol cysteine lipidation.

Belongs to the FlgH family. The basal body constitutes a major portion of the flagellar organelle and consists of four rings (L,P,S, and M) mounted on a central rod.

Its subcellular location is the cell outer membrane. The protein localises to the bacterial flagellum basal body. Functionally, assembles around the rod to form the L-ring and probably protects the motor/basal body from shearing forces during rotation. In Bartonella bacilliformis (strain ATCC 35685 / KC583 / Herrer 020/F12,63), this protein is Flagellar L-ring protein.